Reading from the N-terminus, the 269-residue chain is Leucinostatins biosynthesis cluster protein T (269 aa).

The signal sequence occupies residues 1–15 (MHIILTGTGLVGAIA). N-linked (GlcNAc...) asparagine glycosylation occurs at Asn254.

Its function is as follows. Part of the gene cluster that mediates the biosynthesis of the lipopeptide antibiotics leucinostatins that show extensive biological activities, including antimalarial, antiviral, antibacterial, antifungal, and antitumor activities, as well as phytotoxic. The function of lcsT within the leucinostatins biosynthesis has not been identified yet. The protein is Leucinostatins biosynthesis cluster protein T of Purpureocillium lilacinum (Paecilomyces lilacinus).